A 527-amino-acid chain; its full sequence is Amine oxidase [flavin-containing] A (527 aa).

An N-acetylmethionine modification is found at M1. Over 1 to 497 (MERQEKANNA…RTFWERNLPS (497 aa)) the chain is Cytoplasmic. S383 carries the phosphoserine modification. C406 bears the S-8alpha-FAD cysteine mark. A helical; Anchor for type IV membrane protein transmembrane segment spans residues 498–518 (VTGLLKIIGFSTSVTALWLAV). At 519–527 (YKFRLLTRS) the chain is on the mitochondrial intermembrane side. The interval 520 to 522 (KFR) is interaction with membrane phospholipid headgroups.

Belongs to the flavin monoamine oxidase family. In terms of assembly, monomer, homo- or heterodimer (containing two subunits of similar size). Each subunit contains a covalently bound flavin. Enzymatically active as monomer. The cofactor is FAD.

It localises to the mitochondrion outer membrane. The enzyme catalyses a secondary aliphatic amine + O2 + H2O = a primary amine + an aldehyde + H2O2. It catalyses the reaction a primary methyl amine + O2 + H2O = an aldehyde + H2O2 + NH4(+). The catalysed reaction is (R)-adrenaline + O2 + H2O = (R)-3,4-dihydroxymandelaldehyde + methylamine + H2O2. It carries out the reaction dopamine + O2 + H2O = 3,4-dihydroxyphenylacetaldehyde + H2O2 + NH4(+). The enzyme catalyses tyramine + O2 + H2O = (4-hydroxyphenyl)acetaldehyde + H2O2 + NH4(+). It catalyses the reaction (R)-noradrenaline + O2 + H2O = (R)-3,4-dihydroxymandelaldehyde + H2O2 + NH4(+). The catalysed reaction is serotonin + O2 + H2O = (5-hydroxyindol-3-yl)acetaldehyde + H2O2 + NH4(+). It carries out the reaction kynuramine + O2 + H2O = 3-(2-aminophenyl)-3-oxopropanal + H2O2 + NH4(+). The enzyme catalyses tryptamine + O2 + H2O = indole-3-acetaldehyde + H2O2 + NH4(+). It catalyses the reaction 2-phenylethylamine + O2 + H2O = 2-phenylacetaldehyde + H2O2 + NH4(+). Catalyzes the oxidative deamination of primary and some secondary amine such as neurotransmitters, with concomitant reduction of oxygen to hydrogen peroxide and has important functions in the metabolism of neuroactive and vasoactive amines in the central nervous system and peripheral tissues. Preferentially oxidizes serotonin. Also catalyzes the oxidative deamination of kynuramine to 3-(2-aminophenyl)-3-oxopropanal that can spontaneously condense to 4-hydroxyquinoline. The chain is Amine oxidase [flavin-containing] A from Sus scrofa (Pig).